A 125-amino-acid polypeptide reads, in one-letter code: Snaclec coagulation factor IX/factor X-binding protein subunit B (125 aa).

In terms of domain architecture, C-type lectin spans aspartate 1 to serine 122. 3 disulfides stabilise this stretch: cysteine 2/cysteine 13, cysteine 30/cysteine 120, and cysteine 97/cysteine 112. Serine 41 and glutamate 47 together coordinate Ca(2+).

Belongs to the snaclec family. As to quaternary structure, heterodimer of subunits A and B; disulfide-linked. As to expression, expressed by the venom gland.

The protein resides in the secreted. Anticoagulant protein which binds to coagulation factor IX (F9) and coagulation factor X (F10) in the presence of calcium. It may bind the gamma-carboxyglutamic acid-domain regions of factors with a 1 to 1 stoichiometry. The dissociation constant (K(d)) are 6.6 nM for factor IX (F9) and 125 nM for factor X (F10). Does not bind carbohydrates. In Echis carinatus (Saw-scaled viper), this protein is Snaclec coagulation factor IX/factor X-binding protein subunit B.